Here is a 356-residue protein sequence, read N- to C-terminus: MRRQLRSRRAPAFPYGYRYRLDDQDEANHNYLADEEEEAEEEAQVMMVPGLEEEEEEEEGKEEEEEREEEEGQGQSTGSAWWRKLQIVNEYLWDPEKRMSLARTGQSRSLILVIYFFFYASLAAVITLFIYMLFLAISPYMPTFTEQVKPPGVMIRPFAHSLNFNFNVSEPETWQRYVISLNGFLQGYNDSLQEEMNIDCPPGRYFIQDGDEDEDKKACQFKRSFLKNCSGLEDPTFGYSTGQPCILLKMNRIVGFRPEFGDPVKVSCKVQKGDENDIRSINYYPESASFDLRYYPYYGKLTHVNYTSPLVAMHFTDVVKNQAVPVQCQLKGKGIVNDVINDRFVGRIIFTLNIET.

Residues 1-109 (MRRQLRSRRA…SLARTGQSRS (109 aa)) lie on the Nuclear side of the membrane. The interval 26-78 (EANHNYLADEEEEAEEEAQVMMVPGLEEEEEEEEGKEEEEEREEEEGQGQSTG) is disordered. Acidic residues-rich tracts occupy residues 33 to 43 (ADEEEEAEEEA) and 51 to 72 (LEEE…EEEG). A helical; Signal-anchor for type II membrane protein transmembrane segment spans residues 110–130 (LILVIYFFFYASLAAVITLFI). The Perinuclear space portion of the chain corresponds to 131-356 (YMLFLAISPY…RIIFTLNIET (226 aa)).

It belongs to the X(+)/potassium ATPases subunit beta family. In terms of assembly, associates with a SMAD7-transcriptional complex. Interacts with TOR1AIP1. Does not associate with known Na,K-ATPase alpha-subunits. Interacts with SNW1. Expressed in skeletal muscle (at protein level). Expressed during postnatal development in skeletal muscle and heart.

It is found in the nucleus inner membrane. Functionally, may act as a transcriptional coregulator during muscle development through its interaction with SNW1. Has lost its ancestral function as a Na,K-ATPase beta-subunit. The chain is Protein ATP1B4 (Atp1b4) from Mus musculus (Mouse).